We begin with the raw amino-acid sequence, 423 residues long: Sporulation-regulated protein 28 (423 aa).

Residues Lys28 to Glu342 enclose the Septin-type G domain. The tract at residues Gly38 to Ser45 is G1 motif. GTP-binding positions include Gly38–Ser45, Gly124, Lys204–Glu212, and Arg291. The G3 motif stretch occupies residues Leu121–Gly124. A G4 motif region spans residues Pro203 to Asp206. Polar residues predominate over residues Arg360–Asp381. The interval Arg360–Glu385 is disordered. Residues Asp384 to Ala417 adopt a coiled-coil conformation.

The protein belongs to the TRAFAC class TrmE-Era-EngA-EngB-Septin-like GTPase superfamily. Septin GTPase family. Interacts with itself. Interacts with CDC11 and SPR3; probably to form a ring at the bud neck.

The protein localises to the membrane. The protein resides in the bud neck. Septins are GTPases involved in cytokinesis that assemble into filaments and form a ring at the cleavage site. May act by recruiting MYO1 and HOF1, a protein involved in septation, to the site of cleavage. Septins are also involved in cell morphogenesis, bud site selection, chitin deposition, cell cycle regulation, cell compartmentalization and spore wall formation. This chain is Sporulation-regulated protein 28 (SPR28), found in Saccharomyces cerevisiae (strain ATCC 204508 / S288c) (Baker's yeast).